The sequence spans 974 residues: RING finger protein nhl-1 (974 aa).

The segment at 1–29 is disordered; that stretch reads MSSSPQNEAEAREKMRELMSRPPSSRPAD. A compositionally biased stretch (basic and acidic residues) spans 9 to 19; it reads AEAREKMRELM. The RING-type zinc finger occupies 43–84; the sequence is CPICLDRYKQPKLLPCQHTFCYPCLESCADTLHRNLKCPECR. Disordered regions lie at residues 360–395 and 416–548; these read VKSD…IRYR and SLLT…DFPV. Polar residues predominate over residues 416 to 431; the sequence is SLLTTSVTADSSSRTS. Basic and acidic residues predominate over residues 437-446; that stretch reads RVTRSVEPTK. A compositionally biased stretch (polar residues) spans 447–465; it reads SRPTSLIVPNTETPRTVSP. Positions 488-501 are enriched in pro residues; that stretch reads APLPQLPIRKPPLP. The segment covering 511-528 has biased composition (basic and acidic residues); the sequence is LNEKVETIRRAHQQRQDA. A compositionally biased stretch (low complexity) spans 529-538; it reads SRAASRAVSS. NHL repeat units follow at residues 699-742, 746-788, 792-835, 839-883, 887-930, and 934-974; these read RAVF…FDKD, VRQF…FGLE, LFSF…FDKN, IAKF…FDPH, LFSF…FDAQ, and VSSF…IQIF.

Interacts with ubc-13.

This is RING finger protein nhl-1 from Caenorhabditis elegans.